Consider the following 192-residue polypeptide: Pyridoxal 5'-phosphate synthase subunit PdxT (192 aa).

L-glutamine is bound at residue 46–48; it reads GES. Catalysis depends on cysteine 78, which acts as the Nucleophile. Residues arginine 106 and 135–136 contribute to the L-glutamine site; that span reads IR. Active-site charge relay system residues include histidine 171 and glutamate 173.

This sequence belongs to the glutaminase PdxT/SNO family. In the presence of PdxS, forms a dodecamer of heterodimers. Only shows activity in the heterodimer.

The catalysed reaction is aldehydo-D-ribose 5-phosphate + D-glyceraldehyde 3-phosphate + L-glutamine = pyridoxal 5'-phosphate + L-glutamate + phosphate + 3 H2O + H(+). It carries out the reaction L-glutamine + H2O = L-glutamate + NH4(+). It functions in the pathway cofactor biosynthesis; pyridoxal 5'-phosphate biosynthesis. Catalyzes the hydrolysis of glutamine to glutamate and ammonia as part of the biosynthesis of pyridoxal 5'-phosphate. The resulting ammonia molecule is channeled to the active site of PdxS. This chain is Pyridoxal 5'-phosphate synthase subunit PdxT, found in Kosmotoga olearia (strain ATCC BAA-1733 / DSM 21960 / TBF 19.5.1).